The following is a 532-amino-acid chain: Exodeoxyribonuclease 7 large subunit (532 aa).

The disordered stretch occupies residues 497-532 (AITTGEGTPAPETAAAPKKKPAKPASSDPGNQGNLF). The span at 499 to 512 (TTGEGTPAPETAAA) shows a compositional bias: low complexity.

Belongs to the XseA family. In terms of assembly, heterooligomer composed of large and small subunits.

Its subcellular location is the cytoplasm. It carries out the reaction Exonucleolytic cleavage in either 5'- to 3'- or 3'- to 5'-direction to yield nucleoside 5'-phosphates.. Functionally, bidirectionally degrades single-stranded DNA into large acid-insoluble oligonucleotides, which are then degraded further into small acid-soluble oligonucleotides. The polypeptide is Exodeoxyribonuclease 7 large subunit (Agrobacterium fabrum (strain C58 / ATCC 33970) (Agrobacterium tumefaciens (strain C58))).